A 264-amino-acid chain; its full sequence is Hydroxyethylthiazole kinase (264 aa).

Met-43 provides a ligand contact to substrate. Residues Lys-119 and Ser-165 each contribute to the ATP site. Gly-192 contacts substrate.

The protein belongs to the Thz kinase family. Mg(2+) serves as cofactor.

The enzyme catalyses 5-(2-hydroxyethyl)-4-methylthiazole + ATP = 4-methyl-5-(2-phosphooxyethyl)-thiazole + ADP + H(+). The protein operates within cofactor biosynthesis; thiamine diphosphate biosynthesis; 4-methyl-5-(2-phosphoethyl)-thiazole from 5-(2-hydroxyethyl)-4-methylthiazole: step 1/1. Functionally, catalyzes the phosphorylation of the hydroxyl group of 4-methyl-5-beta-hydroxyethylthiazole (THZ). The protein is Hydroxyethylthiazole kinase of Methanocorpusculum labreanum (strain ATCC 43576 / DSM 4855 / Z).